The chain runs to 386 residues: Putative acid--amine ligase YgiC (386 aa).

100 to 102 contacts ATP; the sequence is RLD. 3 residues coordinate Mg(2+): aspartate 102, glutamate 115, and asparagine 117. ATP contacts are provided by residues lysine 267, lysine 302, glycine 309, glutamine 336, and 371–373; that span reads LIT.

Belongs to the glutathionylspermidine synthase preATP-grasp family.

Functionally, may be a ligase forming an amide bond. Shows ATPase activity. This Escherichia coli O157:H7 protein is Putative acid--amine ligase YgiC (ygiC).